The sequence spans 215 residues: Cytochrome b6 (215 aa).

The helical transmembrane segment at 32–52 threads the bilayer; it reads IFYCFGGIVFTCFLVQVATGF. Cysteine 35 provides a ligand contact to heme c. Positions 86 and 100 each coordinate heme b. 3 helical membrane passes run 90–110, 116–136, and 186–206; these read ASMM…TGGF, LTWV…VTGY, and AHTF…FLMI. Heme b contacts are provided by histidine 187 and histidine 202.

It belongs to the cytochrome b family. PetB subfamily. As to quaternary structure, the 4 large subunits of the cytochrome b6-f complex are cytochrome b6, subunit IV (17 kDa polypeptide, PetD), cytochrome f and the Rieske protein, while the 4 small subunits are PetG, PetL, PetM and PetN. The complex functions as a dimer. Heme b is required as a cofactor. Requires heme c as cofactor.

The protein localises to the plastid. It is found in the chloroplast thylakoid membrane. Its function is as follows. Component of the cytochrome b6-f complex, which mediates electron transfer between photosystem II (PSII) and photosystem I (PSI), cyclic electron flow around PSI, and state transitions. This chain is Cytochrome b6, found in Skeletonema costatum (Marine centric diatom).